The primary structure comprises 378 residues: Non-functional pseudokinase ZRK6 (378 aa).

The 345-residue stretch at Asp-34–Ile-378 folds into the Protein kinase domain. Residues Ile-40 to Ile-48 and Lys-83 contribute to the ATP site.

It belongs to the protein kinase superfamily. Ser/Thr protein kinase family. ZRK subfamily. As to quaternary structure, interacts with RPP13L4/ZAR1.

The polypeptide is Non-functional pseudokinase ZRK6 (Arabidopsis thaliana (Mouse-ear cress)).